Consider the following 1057-residue polypeptide: Probable E3 ubiquitin-protein ligase HERC4 (1057 aa).

RCC1 repeat units follow at residues 1-51 (MLCW…FVLD), 52-101 (DGTV…ALND), 102-154 (KGQV…ALSK), 156-207 (SEVF…VLTL), 208-259 (SGAI…ALTK), 261-311 (GGVF…AFVP), and 313-366 (SGRI…CVKR). The 328-residue stretch at 730 to 1057 (KNIDYKKPLK…IDHNEGFSLI (328 aa)) folds into the HECT domain. The active-site Glycyl thioester intermediate is the cysteine 1025.

Ubiquitously expressed, highest expression is found in testis during spermiogenesis. It is specifically found in spermatogonia, spermatocytes, and spermatids with little or no expression detectable in the spermatozoa, or interstitial cells.

It is found in the cytoplasm. Its subcellular location is the cytosol. It catalyses the reaction S-ubiquitinyl-[E2 ubiquitin-conjugating enzyme]-L-cysteine + [acceptor protein]-L-lysine = [E2 ubiquitin-conjugating enzyme]-L-cysteine + N(6)-ubiquitinyl-[acceptor protein]-L-lysine.. It functions in the pathway protein modification; protein ubiquitination. Functionally, probable E3 ubiquitin-protein ligase involved in either protein trafficking or in the distribution of cellular structures. Required for spermatozoon maturation and fertility, and for the removal of the cytoplasmic droplet of the spermatozoon. E3 ubiquitin-protein ligases accept ubiquitin from an E2 ubiquitin-conjugating enzyme in the form of a thioester and then directly transfer it to targeted substrates. The polypeptide is Probable E3 ubiquitin-protein ligase HERC4 (Herc4) (Mus musculus (Mouse)).